A 256-amino-acid chain; its full sequence is Triosephosphate isomerase (256 aa).

12–14 provides a ligand contact to substrate; it reads NWK. Residue histidine 99 is the Electrophile of the active site. The active-site Proton acceptor is the glutamate 169. Substrate-binding positions include glycine 175, serine 214, and 235-236; that span reads GG.

It belongs to the triosephosphate isomerase family. In terms of assembly, homodimer.

It is found in the cytoplasm. It carries out the reaction D-glyceraldehyde 3-phosphate = dihydroxyacetone phosphate. It functions in the pathway carbohydrate biosynthesis; gluconeogenesis. The protein operates within carbohydrate degradation; glycolysis; D-glyceraldehyde 3-phosphate from glycerone phosphate: step 1/1. Functionally, involved in the gluconeogenesis. Catalyzes stereospecifically the conversion of dihydroxyacetone phosphate (DHAP) to D-glyceraldehyde-3-phosphate (G3P). This Rhizobium meliloti (strain 1021) (Ensifer meliloti) protein is Triosephosphate isomerase.